The following is a 230-amino-acid chain: Lipopolysaccharide core heptose(II) kinase WaaY (230 aa).

Belongs to the protein kinase superfamily. RfaY/WaaY family.

It catalyses the reaction alpha-D-Glc-(1-&gt;3)-[L-alpha-D-Hep-(1-&gt;7)]-L-alpha-D-Hep-(1-&gt;3)-4-O-PO3(2-)-L-alpha-D-Hep-(1-&gt;5)-[alpha-Kdo-(2-&gt;4)]-alpha-Kdo-(2-&gt;6)-lipid A + ATP = alpha-D-Glc-(1-&gt;3)-[L-alpha-D-Hep-(1-&gt;7)]-4-O-PO3(2-)-L-alpha-D-Hep-(1-&gt;3)-4-O-PO3(2-)-L-alpha-D-Hep-(1-&gt;5)-[alpha-Kdo-(2-&gt;4)]-alpha-Kdo-(2-&gt;6)-lipid A + ADP + H(+). It functions in the pathway bacterial outer membrane biogenesis; LPS core biosynthesis. Its function is as follows. Kinase involved in the biosynthesis of the core oligosaccharide region of lipopolysaccharide (LPS). Catalyzes the phosphorylation of the second heptose unit (HepII) of the inner core. The polypeptide is Lipopolysaccharide core heptose(II) kinase WaaY (Escherichia coli).